The primary structure comprises 853 residues: Vacuolar protein sorting-associated protein 41 homolog (853 aa).

A compositionally biased stretch (acidic residues) spans methionine 1 to glutamate 25. The tract at residues methionine 1–glutamate 32 is disordered. The interaction with ARL8B stretch occupies residues methionine 1–phenylalanine 539. The stretch at valine 567–glycine 711 is one CHCR repeat. Residues cysteine 790–serine 838 form an RING-type; atypical zinc finger.

It belongs to the VPS41 family. In terms of assembly, component of the putative homotypic fusion and vacuole protein sorting (HOPS) complex; the core of which composed of the class C Vps proteins VPS11, VPS16, VPS18 and VPS33A, is associated with VPS39 and VPS41. Interacts with RILP, MON1B. Interacts with ARL8B (GTP-bound form); involved in recruitment to lysosomes and probably hierarchial assembly of the HOPS complex at lysosomal membranes. In vitro can self-assemble into a lattice. Associates with adapter protein complex 3 (AP-3) and clathrin:AP-3 complexes. Interacts with STX17; this interaction is increased in the absence of TMEM39A. Interacts with ARL8B and PLEKHM1; the interaction mediates the recruitment of the HOPS complex to lysosomes. Interacts with RAB7, RAB2A and RAB2B. Interacts with RAB39A (GTP-bound) and RAB39B (GTP-bound); interaction with RAB39A leads to a functional HOPS complex that mediates autophagosome-lysosome membrane tethering.

The protein resides in the endosome membrane. Its subcellular location is the late endosome membrane. It localises to the early endosome membrane. The protein localises to the lysosome membrane. It is found in the golgi apparatus. The protein resides in the trans-Golgi network. Its subcellular location is the cytoplasmic vesicle. It localises to the clathrin-coated vesicle. The protein localises to the cytoplasm. It is found in the cytosol. Plays a role in vesicle-mediated protein trafficking to lysosomal compartments including the endocytic membrane transport and autophagic pathways. Believed to act in part as a core component of the putative HOPS endosomal tethering complex is proposed to be involved in the Rab5-to-Rab7 endosome conversion probably implicating MON1A/B, and via binding SNAREs and SNARE complexes to mediate tethering and docking events during SNARE-mediated membrane fusion. The HOPS complex is proposed to be recruited to Rab7 on the late endosomal membrane and to regulate late endocytic, phagocytic and autophagic traffic towards lysosomes. Involved in homotypic vesicle fusions between late endosomes and in heterotypic fusions between late endosomes and lysosomes implicated in degradation of endocytosed cargo. Required for fusion of autophagosomes with lysosomes. Links the HOPS complex to endosomal via its association with RILP and to lysosomal membranes via its association with ARL8B, suggesting that these interactions may bring the compartments to close proximity for fusion. Involved in the direct trans-Golgi network to late endosomes transport of lysosomal membrane proteins independently of HOPS. Involved in sorting to the regulated secretory pathway presumably implicating the AP-3 adapter complex. May play a role in HOPS-independent function in the regulated secretory pathway. In Mus musculus (Mouse), this protein is Vacuolar protein sorting-associated protein 41 homolog (Vps41).